The primary structure comprises 461 residues: Cysteine--tRNA ligase (461 aa).

Cys-28 contacts Zn(2+). A 'HIGH' region motif is present at residues 30–40; it reads ITVYDLCHIGH. The Zn(2+) site is built by Cys-209, His-234, and Glu-238. The 'KMSKS' region motif lies at 266-270; the sequence is KMSKS. ATP is bound at residue Lys-269.

It belongs to the class-I aminoacyl-tRNA synthetase family. In terms of assembly, monomer. Zn(2+) is required as a cofactor.

Its subcellular location is the cytoplasm. The enzyme catalyses tRNA(Cys) + L-cysteine + ATP = L-cysteinyl-tRNA(Cys) + AMP + diphosphate. The chain is Cysteine--tRNA ligase from Escherichia coli (strain 55989 / EAEC).